The primary structure comprises 330 residues: Inactive serine protease 45 (330 aa).

Residues 1–35 (MATSLRLLDAGPGSLRRWIPTCFAALLLLPPRPNL) form the signal peptide. One can recognise a Peptidase S1 domain in the interval 45-291 (VCGAPWWSDS…YTGWIKEQVS (247 aa)). 4 cysteine pairs are disulfide-bonded: Cys-75-Cys-91, Cys-172-Cys-249, Cys-207-Cys-230, and Cys-239-Cys-267. Residue Asn-272 is glycosylated (N-linked (GlcNAc...) asparagine).

Belongs to the peptidase S1 family.

The protein resides in the secreted. The chain is Inactive serine protease 45 (Prss45) from Rattus norvegicus (Rat).